The sequence spans 397 residues: Aromatic-amino-acid aminotransferase (397 aa).

Glycine 34, tyrosine 66, tryptophan 131, and asparagine 184 together coordinate substrate. At lysine 247 the chain carries N6-(pyridoxal phosphate)lysine. Substrate is bound by residues arginine 281 and arginine 375.

Belongs to the class-I pyridoxal-phosphate-dependent aminotransferase family. Homodimer. It depends on pyridoxal 5'-phosphate as a cofactor.

The protein localises to the cytoplasm. The enzyme catalyses an aromatic L-alpha-amino acid + 2-oxoglutarate = an aromatic oxo-acid + L-glutamate. It catalyses the reaction (3S)-3-methyl-L-phenylalanine + 2-oxoglutarate = (3S)-2-oxo-3-phenylbutanoate + L-glutamate. It participates in amino-acid biosynthesis; L-phenylalanine biosynthesis; L-phenylalanine from phenylpyruvate (ArAT route): step 1/1. Its pathway is amino-acid biosynthesis; L-tyrosine biosynthesis; L-tyrosine from (4-hydroxyphenyl)pyruvate: step 1/1. Its function is as follows. Broad-specificity enzyme that catalyzes the transamination of 2-ketoisocaproate, p-hydroxyphenylpyruvate, and phenylpyruvate to yield leucine, tyrosine, and phenylalanine, respectively. In vitro, is able to catalyze the conversion of beta-methyl phenylpyruvate to the nonproteinogenic amino acid (2S,3S)-beta-methyl-phenylalanine, a building block of the antibiotic mannopeptimycin produced by Streptomyces hygroscopicus NRRL3085. This Escherichia coli (strain K12) protein is Aromatic-amino-acid aminotransferase (tyrB).